Reading from the N-terminus, the 86-residue chain is Cytochrome c oxidase subunit 3 (86 aa).

At 1 to 15 (MAHQAHSYHMVDPSP) the chain is on the mitochondrial matrix side. A helical membrane pass occupies residues 16–34 (WPIFGAAAALLTTSGLVMW). Over 35-40 (FHYNSS) the chain is Mitochondrial intermembrane. Residues 41–66 (ILLAAGLLSMLLVMLQWWREIVREST) form a helical membrane-spanning segment. Topologically, residues 67–86 (FQGHHTPTVQKGLRYGMILF) are mitochondrial matrix.

Belongs to the cytochrome c oxidase subunit 3 family. In terms of assembly, component of the cytochrome c oxidase (complex IV, CIV), a multisubunit enzyme composed of 14 subunits. The complex is composed of a catalytic core of 3 subunits MT-CO1, MT-CO2 and MT-CO3, encoded in the mitochondrial DNA, and 11 supernumerary subunits COX4I, COX5A, COX5B, COX6A, COX6B, COX6C, COX7A, COX7B, COX7C, COX8 and NDUFA4, which are encoded in the nuclear genome. The complex exists as a monomer or a dimer and forms supercomplexes (SCs) in the inner mitochondrial membrane with NADH-ubiquinone oxidoreductase (complex I, CI) and ubiquinol-cytochrome c oxidoreductase (cytochrome b-c1 complex, complex III, CIII), resulting in different assemblies (supercomplex SCI(1)III(2)IV(1) and megacomplex MCI(2)III(2)IV(2)).

The protein localises to the mitochondrion inner membrane. It carries out the reaction 4 Fe(II)-[cytochrome c] + O2 + 8 H(+)(in) = 4 Fe(III)-[cytochrome c] + 2 H2O + 4 H(+)(out). Functionally, component of the cytochrome c oxidase, the last enzyme in the mitochondrial electron transport chain which drives oxidative phosphorylation. The respiratory chain contains 3 multisubunit complexes succinate dehydrogenase (complex II, CII), ubiquinol-cytochrome c oxidoreductase (cytochrome b-c1 complex, complex III, CIII) and cytochrome c oxidase (complex IV, CIV), that cooperate to transfer electrons derived from NADH and succinate to molecular oxygen, creating an electrochemical gradient over the inner membrane that drives transmembrane transport and the ATP synthase. Cytochrome c oxidase is the component of the respiratory chain that catalyzes the reduction of oxygen to water. Electrons originating from reduced cytochrome c in the intermembrane space (IMS) are transferred via the dinuclear copper A center (CU(A)) of subunit 2 and heme A of subunit 1 to the active site in subunit 1, a binuclear center (BNC) formed by heme A3 and copper B (CU(B)). The BNC reduces molecular oxygen to 2 water molecules using 4 electrons from cytochrome c in the IMS and 4 protons from the mitochondrial matrix. This chain is Cytochrome c oxidase subunit 3 (MT-CO3), found in Anas platyrhynchos (Mallard).